The chain runs to 249 residues: MSEHPRDTPQFYLTAPSPCPYLPGREERKVFTHLVGDKAASLNDVLTQGGFRRSQSIAYRPACEGCKACVSVRICVDDFTPGRSFRRVQADNSDLIGQIKPATPTSEQYALFRSYVTGRHGTGGMADMSVLDYAMMVEDTHVHTRLVEYRKRGPDSRIIPRGTGDLMAVALTDVLTDGLSMVYSFYNPQVHDRSLGTFLILDHITRARQMGLPYVYLGYWVQGSRKMDYKRRYLPQERLTPHGWERVEK.

Belongs to the R-transferase family. Bpt subfamily.

Its subcellular location is the cytoplasm. The enzyme catalyses N-terminal L-glutamyl-[protein] + L-leucyl-tRNA(Leu) = N-terminal L-leucyl-L-glutamyl-[protein] + tRNA(Leu) + H(+). It catalyses the reaction N-terminal L-aspartyl-[protein] + L-leucyl-tRNA(Leu) = N-terminal L-leucyl-L-aspartyl-[protein] + tRNA(Leu) + H(+). In terms of biological role, functions in the N-end rule pathway of protein degradation where it conjugates Leu from its aminoacyl-tRNA to the N-termini of proteins containing an N-terminal aspartate or glutamate. In Xanthobacter autotrophicus (strain ATCC BAA-1158 / Py2), this protein is Aspartate/glutamate leucyltransferase.